Consider the following 420-residue polypeptide: Glutamyl-tRNA reductase (420 aa).

Substrate contacts are provided by residues 49-52, Ser109, 114-116, and Gln120; these read TCNR and EPQ. Cys50 (nucleophile) is an active-site residue. 189–194 contributes to the NADP(+) binding site; sequence GAGETI.

The protein belongs to the glutamyl-tRNA reductase family. Homodimer.

The catalysed reaction is (S)-4-amino-5-oxopentanoate + tRNA(Glu) + NADP(+) = L-glutamyl-tRNA(Glu) + NADPH + H(+). Its pathway is porphyrin-containing compound metabolism; protoporphyrin-IX biosynthesis; 5-aminolevulinate from L-glutamyl-tRNA(Glu): step 1/2. Functionally, catalyzes the NADPH-dependent reduction of glutamyl-tRNA(Glu) to glutamate 1-semialdehyde (GSA). The polypeptide is Glutamyl-tRNA reductase (Edwardsiella ictaluri (strain 93-146)).